Consider the following 488-residue polypeptide: H2.0-like homeobox protein (488 aa).

Disordered regions lie at residues 118-173 (AYHH…SSKD) and 331-488 (WRHS…LGCL). Low complexity-rich tracts occupy residues 125 to 135 (QQQQQQQQPQQ) and 158 to 171 (PNPH…APSS). A DNA-binding region (homeobox) is located at residues 276–335 (RSWSRAVFSNLQRKGLEKRFEIQKYVTKPDRKQLAAMLGLTDAQVKVWFQNRRMKWRHSK). Basic and acidic residues-rich tracts occupy residues 334-349 (SKEA…EAGE) and 363-372 (DERSPSRSEG). Residues 373-383 (EAESESSDSES) show a composition bias toward acidic residues. Positions 390–401 (DTERTEGSERSL) are enriched in basic and acidic residues. Gly residues predominate over residues 422 to 432 (GSGGSSGGGGN). Over residues 433–454 (SFSFSSASSLSSSSTSAGCASS) the composition is skewed to low complexity.

This sequence belongs to the H2.0 homeobox family. Low level in normal B and T-cells, high level in activated lymphocytes and monocytes. Also found in thymus, tonsil, bone marrow, developing vessels, and fetal brain.

The protein resides in the nucleus. Functionally, transcription factor required for TBX21/T-bet-dependent maturation of Th1 cells as well as maintenance of Th1-specific gene expression. Involved in embryogenesis and hematopoiesis. The sequence is that of H2.0-like homeobox protein (HLX) from Homo sapiens (Human).